Reading from the N-terminus, the 220-residue chain is Tumor protein D54 (220 aa).

Residue M1 is modified to N-acetylmethionine. 3 positions are modified to phosphoserine: S3, S12, and S19. Positions 40–82 (GLTEGEEEELRAELAKVEEEIVTLRQVLAAKERHCGELKRRLG) form a coiled coil. Phosphoserine is present on residues S96, S149, S168, and S175. Position 177 is a phosphothreonine (T177). Residue S180 is modified to Phosphoserine. A Phosphothreonine modification is found at T187. The segment at 189–220 (KSKVVGGRENGSDNLPPSPGSGDQTLPDHAPF) is disordered. Residues S206 and S209 each carry the phosphoserine modification.

Belongs to the TPD52 family. Forms a homodimer or heterodimer with other members of the family. Interacts with MAL2.

This is Tumor protein D54 (Tpd52l2) from Mus musculus (Mouse).